Reading from the N-terminus, the 260-residue chain is 3-methyl-2-oxobutanoate hydroxymethyltransferase (260 aa).

Asp42 and Asp81 together coordinate Mg(2+). 3-methyl-2-oxobutanoate-binding positions include 42–43, Asp81, and Lys109; that span reads DS. Residue Glu111 participates in Mg(2+) binding. Glu178 serves as the catalytic Proton acceptor.

This sequence belongs to the PanB family. Homodecamer; pentamer of dimers. Requires Mg(2+) as cofactor.

The protein localises to the cytoplasm. The enzyme catalyses 3-methyl-2-oxobutanoate + (6R)-5,10-methylene-5,6,7,8-tetrahydrofolate + H2O = 2-dehydropantoate + (6S)-5,6,7,8-tetrahydrofolate. The protein operates within cofactor biosynthesis; (R)-pantothenate biosynthesis; (R)-pantoate from 3-methyl-2-oxobutanoate: step 1/2. In terms of biological role, catalyzes the reversible reaction in which hydroxymethyl group from 5,10-methylenetetrahydrofolate is transferred onto alpha-ketoisovalerate to form ketopantoate. This chain is 3-methyl-2-oxobutanoate hydroxymethyltransferase, found in Ruthia magnifica subsp. Calyptogena magnifica.